The sequence spans 456 residues: Gamma-aminobutyric acid receptor subunit alpha-1 (456 aa).

An N-terminal signal peptide occupies residues 1–27; that stretch reads MRKSPGLSDCLWAWILLLSTLTGRSYG. Topologically, residues 28–253 are extracellular; sequence QPSLQDELKD…FHLKRKIGYF (226 aa). A glycan (N-linked (GlcNAc...) asparagine) is linked at N38. R94 contributes to the 4-aminobutanoate binding site. N-linked (GlcNAc...) asparagine glycosylation is present at N138. Residue T157 coordinates 4-aminobutanoate. C166 and C180 are joined by a disulfide. The chain crosses the membrane as a helical span at residues 254–274; it reads VIQTYLPCIMTVILSQVSFWL. Residues 275-279 are Cytoplasmic-facing; sequence NRESV. A helical transmembrane segment spans residues 280-301; it reads PARTVFGVTTVLTMTTLSISAR. Over 302 to 311 the chain is Extracellular; sequence NSLPKVAYAT. Residues 312-333 form a helical membrane-spanning segment; that stretch reads AMDWFIAVCYAFVFSALIEFAT. Topologically, residues 334 to 421 are cytoplasmic; the sequence is VNYFTKRGYA…TFNSVSKIDR (88 aa). A helical membrane pass occupies residues 422 to 441; that stretch reads LSRIAFPLLFGIFNLIYWAT. Over 442 to 456 the chain is Extracellular; that stretch reads YLNREPQLKAPTPHQ.

The protein belongs to the ligand-gated ion channel (TC 1.A.9) family. Gamma-aminobutyric acid receptor (TC 1.A.9.5) subfamily. GABRA1 sub-subfamily. In terms of assembly, heteropentamer, formed by a combination of alpha (GABRA1-6), beta (GABRB1-3), gamma (GABRG1-3), delta (GABRD), epsilon (GABRE), rho (GABRR1-3), pi (GABRP) and theta (GABRQ) subunits, each subunit exhibiting distinct physiological and pharmacological properties. Interacts with UBQLN1. Interacts with TRAK1. Interacts with KIF21B. Identified in a complex of 720 kDa composed of LHFPL4, NLGN2, GABRA1, GABRB2, GABRG2 and GABRB3. Interacts with LHFPL4. Interacts with NLGN2. Interacts with SHISA7; interaction leads to the regulation of GABA(A) receptor trafficking, channel deactivation kinetics and pharmacology.

Its subcellular location is the postsynaptic cell membrane. The protein resides in the cell membrane. The protein localises to the cytoplasmic vesicle membrane. It carries out the reaction chloride(in) = chloride(out). Allosterically activated by benzodiazepines, the neuroanesthetic alphaxalone and pentobarbital. Inhibited by the antagonist bicuculline. Potentiated by histamine. Functionally, alpha subunit of the heteropentameric ligand-gated chloride channel gated by gamma-aminobutyric acid (GABA), a major inhibitory neurotransmitter in the brain. GABA-gated chloride channels, also named GABA(A) receptors (GABAAR), consist of five subunits arranged around a central pore and contain GABA active binding site(s) located at the alpha and beta subunit interface(s). When activated by GABA, GABAARs selectively allow the flow of chloride anions across the cell membrane down their electrochemical gradient. Alpha-1/GABRA1-containing GABAARs are largely synaptic. Chloride influx into the postsynaptic neuron following GABAAR opening decreases the neuron ability to generate a new action potential, thereby reducing nerve transmission. GABAARs containing alpha-1 and beta-2 or -3 subunits exhibit synaptogenic activity; the gamma-2 subunit being necessary but not sufficient to induce rapid synaptic contacts formation. GABAARs function also as histamine receptor where histamine binds at the interface of two neighboring beta subunits and potentiates GABA response. GABAARs containing alpha, beta and epsilon subunits also permit spontaneous chloride channel activity while preserving the structural information required for GABA-gated openings. Alpha-1-mediated plasticity in the orbitofrontal cortex regulates context-dependent action selection. Together with rho subunits, may also control neuronal and glial GABAergic transmission in the cerebellum. This chain is Gamma-aminobutyric acid receptor subunit alpha-1 (GABRA1), found in Pongo abelii (Sumatran orangutan).